Reading from the N-terminus, the 163-residue chain is NADPH-dependent 7-cyano-7-deazaguanine reductase (163 aa).

Residue cysteine 54 is the Thioimide intermediate of the active site. The active-site Proton donor is aspartate 61. Substrate-binding positions include 76–78 (VES) and 95–96 (HE).

It belongs to the GTP cyclohydrolase I family. QueF type 1 subfamily.

The protein localises to the cytoplasm. The catalysed reaction is 7-aminomethyl-7-carbaguanine + 2 NADP(+) = 7-cyano-7-deazaguanine + 2 NADPH + 3 H(+). The protein operates within tRNA modification; tRNA-queuosine biosynthesis. Functionally, catalyzes the NADPH-dependent reduction of 7-cyano-7-deazaguanine (preQ0) to 7-aminomethyl-7-deazaguanine (preQ1). The polypeptide is NADPH-dependent 7-cyano-7-deazaguanine reductase (Streptococcus thermophilus (strain CNRZ 1066)).